We begin with the raw amino-acid sequence, 1755 residues long: Transposon Ty1-ER2 Gag-Pol polyprotein (1755 aa).

Composition is skewed to polar residues over residues 1–10 (MESQQLSNYP), 48–60 (TKANSQQTTTPAS), and 127–152 (QSQFPQYPSSVGTPLSTPSPESGNTF). Disordered regions lie at residues 1–93 (MESQ…MMTQ), 126–173 (PQSQ…RPPP), and 352–421 (GSRN…SKST). Residues 153–165 (TDSSSADSDMTST) show a composition bias toward low complexity. Positions 299-401 (NNGIHINNKV…NSKSKTARAH (103 aa)) are RNA-binding. Positions 402–418 (NVSTSNNSPSTDNDSIS) are enriched in low complexity. Residue aspartate 461 is the For protease activity; shared with dimeric partner of the active site. Residues 583–640 (NVHTSESTRKYPYPFIHRMLAHANAQTIRYSLKNNTITYFNESDVDWSSAIDYQCPDC) form an integrase-type zinc finger-like region. One can recognise an Integrase catalytic domain in the interval 660–835 (NSYEPFQYLH…AGLDISTLLP (176 aa)). Mg(2+) is bound by residues aspartate 671 and aspartate 736. The segment at 958-1170 (AVSPTDSTPP…SSLGGIGDSN (213 aa)) is disordered. The span at 960–969 (SPTDSTPPST) shows a compositional bias: low complexity. A compositionally biased stretch (polar residues) spans 1005–1015 (STPQISDIEST). Residues 1038–1053 (ESSHASKSKDFRHSDS) are compositionally biased toward basic and acidic residues. Composition is skewed to polar residues over residues 1054 to 1082 (YSDNETNHTNVPISSTGGTNNKTVPQTSE) and 1095 to 1106 (SIDTSSSESNSL). The Bipartite nuclear localization signal signature appears at 1178 to 1212 (KKRSLEDNETEIKVSRDTWNTKNMRSLEPPRSKKR). One can recognise a Reverse transcriptase Ty1/copia-type domain in the interval 1338–1476 (NNYYITQLDI…DILGLEIKYQ (139 aa)). Mg(2+) is bound by residues aspartate 1346, aspartate 1427, aspartate 1428, aspartate 1610, glutamate 1652, and aspartate 1685. Residues 1610–1752 (DASYGNQPYY…IKTFKLLTNK (143 aa)) enclose the RNase H Ty1/copia-type domain.

In terms of assembly, the capsid protein forms a homotrimer, from which the VLPs are assembled. The protease is a homodimer, whose active site consists of two apposed aspartic acid residues. In terms of processing, initially, virus-like particles (VLPs) are composed of the structural unprocessed proteins Gag and Gag-Pol, and also contain the host initiator methionine tRNA (tRNA(i)-Met) which serves as a primer for minus-strand DNA synthesis, and a dimer of genomic Ty RNA. Processing of the polyproteins occurs within the particle and proceeds by an ordered pathway, called maturation. First, the protease (PR) is released by autocatalytic cleavage of the Gag-Pol polyprotein yielding capsid protein p45 and a Pol-p154 precursor protein. This cleavage is a prerequisite for subsequent processing of Pol-p154 at the remaining sites to release the mature structural and catalytic proteins. Maturation takes place prior to the RT reaction and is required to produce transposition-competent VLPs.

The protein localises to the cytoplasm. It is found in the nucleus. It carries out the reaction DNA(n) + a 2'-deoxyribonucleoside 5'-triphosphate = DNA(n+1) + diphosphate. The enzyme catalyses Endonucleolytic cleavage to 5'-phosphomonoester.. Its function is as follows. Capsid protein (CA) is the structural component of the virus-like particle (VLP), forming the shell that encapsulates the retrotransposons dimeric RNA genome. The particles are assembled from trimer-clustered units and there are holes in the capsid shells that allow for the diffusion of macromolecules. CA also has nucleocapsid-like chaperone activity, promoting primer tRNA(i)-Met annealing to the multipartite primer-binding site (PBS), dimerization of Ty1 RNA and initiation of reverse transcription. Functionally, the aspartyl protease (PR) mediates the proteolytic cleavages of the Gag and Gag-Pol polyproteins after assembly of the VLP. In terms of biological role, reverse transcriptase/ribonuclease H (RT) is a multifunctional enzyme that catalyzes the conversion of the retro-elements RNA genome into dsDNA within the VLP. The enzyme displays a DNA polymerase activity that can copy either DNA or RNA templates, and a ribonuclease H (RNase H) activity that cleaves the RNA strand of RNA-DNA heteroduplexes during plus-strand synthesis and hydrolyzes RNA primers. The conversion leads to a linear dsDNA copy of the retrotransposon that includes long terminal repeats (LTRs) at both ends. Integrase (IN) targets the VLP to the nucleus, where a subparticle preintegration complex (PIC) containing at least integrase and the newly synthesized dsDNA copy of the retrotransposon must transit the nuclear membrane. Once in the nucleus, integrase performs the integration of the dsDNA into the host genome. The polypeptide is Transposon Ty1-ER2 Gag-Pol polyprotein (TY1B-ER2) (Saccharomyces cerevisiae (strain ATCC 204508 / S288c) (Baker's yeast)).